We begin with the raw amino-acid sequence, 362 residues long: MQVSNSMSLNDEEDDIEFINYIPLLASPINSSTCSTSIHDKCPFKQHISENGQNFGSAISSNISQRNFKTLRASHLSQYRDCNRENNTEDKNVISTGIAVNEKYQSVLKLKEKAPQISSAAKRKSFIKERGMLAKCFLARLEDEVFQGRLTSSLEKKEIGIVWSKSFSTTAGRANLKRNNKDAPLGKKTYAYIELSDKVIVTKERLYNTLAHEVCHLACWIIDNEMQNPHGACFKAWGKRIMNNMPYIEITSKHNYDIDFKYKWLCINEKCNKLYGRHSKSINPQKQVCRLCKSQIKQICPKIKQPNAFQIFLKENSKRLRKLHPHITHKELMKKLSDEYHRTKDAKQNVSKSVSLISSSDL.

Positions 135-299 constitute a SprT-like domain; sequence KCFLARLEDE…RLCKSQIKQI (165 aa). Residues 306–348 constitute a DNA-binding region (HMG box); it reads PNAFQIFLKENSKRLRKLHPHITHKELMKKLSDEYHRTKDAKQ.

It is found in the nucleus. The protein localises to the cytoplasm. Its subcellular location is the cytoskeleton. It localises to the spindle. This is HMG box-containing protein C19G7.04 from Schizosaccharomyces pombe (strain 972 / ATCC 24843) (Fission yeast).